The chain runs to 139 residues: Type II methyltransferase M.AquIB (139 aa).

The SAM-dependent MTase C5-type domain maps to methionine 1–valine 135. Positions lysine 38–arginine 58 are disordered.

This sequence belongs to the class I-like SAM-binding methyltransferase superfamily. C5-methyltransferase family. As to quaternary structure, heterodimer of an alpha and a beta subunit.

It carries out the reaction a 2'-deoxycytidine in DNA + S-adenosyl-L-methionine = a 5-methyl-2'-deoxycytidine in DNA + S-adenosyl-L-homocysteine + H(+). In terms of biological role, a methylase, recognizes the double-stranded sequence 5'-CYCGRG-3', methylates C-1 on both strands, and protects the DNA from cleavage by the AquI endonuclease. The sequence is that of Type II methyltransferase M.AquIB (aquIMB) from Picosynechococcus sp. (strain ATCC 27264 / PCC 7002 / PR-6) (Agmenellum quadruplicatum).